The sequence spans 387 residues: MEQSQSQRQAWPSSSAGGGKAQDSGVLTREDFDGGPVSIDEVDTGLFLGNLTAATHMETLRSFKITHILTLDSVPLPQHILEASFLTTKYIQIADMPREDILQHLEGCVDFISSALAQQGNVLVHCYFGVSRSSSTVIAYMMKRHNLDFLPAYELVKAKRRFVQPNAGFVSQLKLFRRMGCKIDPNCQRYKIHRLRLAGEQMRKAKILPQSFHSVVRPDPDITRENPEPIVFRCRRCRRVLASKSHVLEHKPRDRPPQEVVPKEKEEVAAAKLPAQSHDQAENHHGARMLEQLSERIRQSSLGSPGHESTPNYCRSILFVEPIAWMHRIMLNTQGRLYCPKCEQKLGNFSWINACKCPCGETMTPAFYLIPSKVELSKAVQNVQTTV.

A compositionally biased stretch (polar residues) spans 1-15 (MEQSQSQRQAWPSSS). The segment at 1-27 (MEQSQSQRQAWPSSSAGGGKAQDSGVL) is disordered. One can recognise a Tyrosine-protein phosphatase domain in the interval 35 to 182 (GPVSIDEVDT…LKLFRRMGCK (148 aa)). Cysteine 126 serves as the catalytic Phosphocysteine intermediate. The tract at residues 248 to 267 (LEHKPRDRPPQEVVPKEKEE) is disordered.

It belongs to the protein-tyrosine phosphatase family. Non-receptor class dual specificity subfamily. In terms of assembly, interacts (via tyrosine-protein phosphatase domain) with bsk/JNK; the interaction dephosphorylates bsk.

Its subcellular location is the nucleus. The protein localises to the cytoplasm. It carries out the reaction O-phospho-L-tyrosyl-[protein] + H2O = L-tyrosyl-[protein] + phosphate. The catalysed reaction is O-phospho-L-seryl-[protein] + H2O = L-seryl-[protein] + phosphate. The enzyme catalyses O-phospho-L-threonyl-[protein] + H2O = L-threonyl-[protein] + phosphate. Its activity is regulated as follows. Inhibited by the tyrosine phosphatase inhibitor sodium vanadate. In terms of biological role, dual specificity phosphatase; can dephosphorylate both phosphotyrosine and phosphoserine or phosphothreonine residues. May suppress bsk/JNK activation during the immune response. The polypeptide is Dual specificity protein phosphatase MPK-4 (Drosophila melanogaster (Fruit fly)).